The following is a 351-amino-acid chain: uncharacterized protein (351 aa).

Residues 14–69 form the HTH lacI-type domain; that stretch reads PRLADIAAQAQVSEATASRVLNGRPASRXSTRQRVLAALDLLGYERPTRLRRRSAG. Positions 16 to 35 form a DNA-binding region, H-T-H motif; the sequence is LADIAAQAQVSEATASRVLN.

In terms of biological role, putative sugar-binding regulatory protein for the alpha-amylase gene. This is an uncharacterized protein from Streptomyces limosus (Streptomyces albidoflavus).